The chain runs to 216 residues: 3-isopropylmalate dehydratase small subunit (216 aa).

It belongs to the LeuD family. LeuD type 1 subfamily. Heterodimer of LeuC and LeuD.

It carries out the reaction (2R,3S)-3-isopropylmalate = (2S)-2-isopropylmalate. It participates in amino-acid biosynthesis; L-leucine biosynthesis; L-leucine from 3-methyl-2-oxobutanoate: step 2/4. In terms of biological role, catalyzes the isomerization between 2-isopropylmalate and 3-isopropylmalate, via the formation of 2-isopropylmaleate. In Acidovorax ebreus (strain TPSY) (Diaphorobacter sp. (strain TPSY)), this protein is 3-isopropylmalate dehydratase small subunit.